Consider the following 174-residue polypeptide: ATP-dependent protease subunit HslV (174 aa).

Threonine 2 is an active-site residue. Na(+)-binding residues include glycine 157, cysteine 160, and threonine 163.

The protein belongs to the peptidase T1B family. HslV subfamily. In terms of assembly, a double ring-shaped homohexamer of HslV is capped on each side by a ring-shaped HslU homohexamer. The assembly of the HslU/HslV complex is dependent on binding of ATP.

The protein resides in the cytoplasm. It catalyses the reaction ATP-dependent cleavage of peptide bonds with broad specificity.. With respect to regulation, allosterically activated by HslU binding. Functionally, protease subunit of a proteasome-like degradation complex believed to be a general protein degrading machinery. This Shewanella oneidensis (strain ATCC 700550 / JCM 31522 / CIP 106686 / LMG 19005 / NCIMB 14063 / MR-1) protein is ATP-dependent protease subunit HslV.